Reading from the N-terminus, the 404-residue chain is Schlafen-like protein 1 (404 aa).

2 disordered regions span residues 1–31 and 139–170; these read MTPM…LPTE and GPLS…AWPT. Over residues 7–16 the composition is skewed to polar residues; sequence SVQTQVSEPF. Positions 152–165 are enriched in low complexity; the sequence is GLSPGPNPGSGVPL. 258-265 is a binding site for ATP; it reads GVEDSGLV. The stretch at 365–395 forms a coiled coil; sequence RWLVELGKLEERVKVLTMEKEQLQQQLQQHG.

Belongs to the Schlafen family. Subgroup I subfamily.

The protein is Schlafen-like protein 1 (SLFNL1) of Macaca fascicularis (Crab-eating macaque).